Reading from the N-terminus, the 1651-residue chain is A.superbus venom factor 2 (1651 aa).

The signal sequence occupies residues 1 to 22; it reads MEGMALYLVAALLIGFPGSSHG. N189 carries an N-linked (GlcNAc...) asparagine glycan. Residues P519, D542, V543, and D545 each contribute to the Mg(2+) site. 12 disulfides stabilise this stretch: C547/C808, C616/C651, C684/C711, C685/C718, C698/C719, C864/C1501, C1346/C1477, C1377/C1446, C1494/C1499, C1506/C1578, C1525/C1649, and C1625/C1634. Residues 657–739 constitute a propeptide that is removed on maturation; it reads RRRRSSVLLL…QRESELFLAR (83 aa). Positions 661–739 are C3a-like domain; that stretch reads SSVLLLDSKA…QRESELFLAR (79 aa). The Anaphylatoxin-like domain occupies 684–719; the sequence is CCEDGMHENPMGYTCEKRAKYTQEGDACKAAFLECC. The tract at residues 743–754 is factor B binding site; it reads EDEFFEEDNIIS. Positions 992–1269 are excised as a propeptide; sequence HLIITPSGSG…VMVFQALAEY (278 aa). The segment at 992-1269 is C3d-like domain; sequence HLIITPSGSG…VMVFQALAEY (278 aa). Residues 1197-1259 form a factor H binding site region; sequence VLMAASTGRD…GGTYGQTQAT (63 aa). N-linked (GlcNAc...) asparagine glycans are attached at residues N1282 and N1352. Residues 1506 to 1649 enclose the NTR domain; it reads CSLLNQQKKI…LSNTLTIFGC (144 aa).

It belongs to the venom complement C3 homolog family. As to quaternary structure, heterotrimer of alpha, beta and gamma chains; disulfide-linked. Is active with factor B in the presence of factor D. First processed by the removal of 4 Arg residues by furin-type protease, forming two chains, alpha and gamma/beta precursor, linked by a disulfide bond. This mature AVF is composed of three chains: alpha, gamma and beta. As to expression, expressed by the venom gland.

The protein localises to the secreted. Complement-activating protein in snake venom. It is a structural and functional analog of complement component C3b, the activated form of C3. It binds factor B (CFB), which is subsequently cleaved by factor D (CFD) to form the bimolecular complex AVF/Bb. AVF/Bb is a C3 convertase that cleaves complement component C3, but not C5 (as do CVF/Bb). The sequence is that of A.superbus venom factor 2 from Austrelaps superbus (Lowland copperhead snake).